Consider the following 101-residue polypeptide: Small ribosomal subunit protein uS14 (101 aa).

This sequence belongs to the universal ribosomal protein uS14 family. As to quaternary structure, part of the 30S ribosomal subunit. Contacts proteins S3 and S10.

Binds 16S rRNA, required for the assembly of 30S particles and may also be responsible for determining the conformation of the 16S rRNA at the A site. The polypeptide is Small ribosomal subunit protein uS14 (Citrobacter koseri (strain ATCC BAA-895 / CDC 4225-83 / SGSC4696)).